The sequence spans 246 residues: Complement C1q tumor necrosis factor-related protein 3 (246 aa).

A signal peptide spans 1–22 (MLWRQLIYWQLLALFFLPFCLC). A Collagen-like domain is found at 51–113 (GYQGPPGPPG…KGEKGYPGIP (63 aa)). The interval 53–110 (QGPPGPPGPPGIPGNHGNNGNNGATGHEGAKGEKGDKGDLGPRGERGQHGPKGEKGYP) is disordered. Residues 55-64 (PPGPPGPPGI) are compositionally biased toward pro residues. A compositionally biased stretch (low complexity) spans 65 to 74 (PGNHGNNGNN). Residue N70 is glycosylated (N-linked (GlcNAc...) asparagine). Residues 80-107 (EGAKGEKGDKGDLGPRGERGQHGPKGEK) are compositionally biased toward basic and acidic residues. In terms of domain architecture, C1q spans 113 to 246 (PPELQIAFMA…FAGFLLFETK (134 aa)).

Glycosylated on Asn-70. In terms of tissue distribution, expressed in colon and small intestine.

It is found in the secreted. The protein is Complement C1q tumor necrosis factor-related protein 3 (C1QTNF3) of Homo sapiens (Human).